We begin with the raw amino-acid sequence, 325 residues long: Small ribosomal subunit protein uS2 (325 aa).

Residues 212–226 are compositionally biased toward basic and acidic residues; sequence KEEQAKAEAERERLA. Positions 212-325 are disordered; that stretch reads KEEQAKAEAE…TEPKASTGNW (114 aa). 2 stretches are compositionally biased toward low complexity: residues 234-247 and 261-289; these read QPAAPQQDPDQWAD and PVTTAPVPTGGAPPVASTTATPATNTGSG. The segment covering 290-300 has biased composition (polar residues); that stretch reads FNQDDWSVPTT.

It belongs to the universal ribosomal protein uS2 family. Component of the small ribosomal subunit. Mature ribosomes consist of a small (40S) and a large (60S) subunit. The 40S subunit contains about 33 different proteins and 1 molecule of RNA (18S). The 60S subunit contains about 49 different proteins and 3 molecules of RNA (28S, 5.8S and 5S). Interacts with ribosomal protein S21.

It is found in the cytoplasm. Functionally, required for the assembly and/or stability of the 40S ribosomal subunit. Required for the processing of the 20S rRNA-precursor to mature 18S rRNA in a late step of the maturation of 40S ribosomal subunits. This Suberites domuncula (Sponge) protein is Small ribosomal subunit protein uS2.